A 358-amino-acid chain; its full sequence is Arginine kinase (358 aa).

The 83-residue stretch at S6–K88 folds into the Phosphagen kinase N-terminal domain. G61–Y65 is a substrate binding site. The Phosphagen kinase C-terminal domain maps to Y116–L353. ATP contacts are provided by residues S119–R123 and H182. A substrate-binding site is contributed by E222. R226 is a binding site for ATP. Position 269 (C269) interacts with substrate. ATP contacts are provided by residues R278–H282 and R306–E311. Residue E311 coordinates substrate.

It belongs to the ATP:guanido phosphotransferase family. As to quaternary structure, monomer.

The catalysed reaction is L-arginine + ATP = N(omega)-phospho-L-arginine + ADP + H(+). The polypeptide is Arginine kinase (Haliotis madaka (Giant abalone)).